The sequence spans 350 residues: Kelch domain-containing protein 8A (350 aa).

Kelch repeat units follow at residues 1-31 (MEVP…ETGG), 32-79 (QVYA…ALGK), 81-127 (IMVI…AKDY), 128-175 (RVYA…LRGS), 176-222 (KIYV…TLDN), 224-278 (LYSL…GLSG), and 279-326 (RVIV…VFKN).

The sequence is that of Kelch domain-containing protein 8A (Klhdc8a) from Mus musculus (Mouse).